A 280-amino-acid chain; its full sequence is MELKKTAESLYSAKTDNHTVYQNSPEPRDSRDVKVFSLEGKQTRQEKTTSSKGNTRTESRKFADEEKRVDDEIAEVGSKEEEQESQEFCLAENAFAGMSLIDIAAAGSAEAVVEVAPIAVSSIDTQWIENIILSTVESMVISEINGEQLVELVLDASSSVPEAFVGANLTLVQSGQDLSVKFSSFVDATQMAEAADLVTNNPSQLSSLVSALKGHQLTLKEFSVGNLLVQLPKIEEVQTPLHMIASTIRHREEKDQRDQNQKQKQDDKEQDSYKIEEARL.

Disordered stretches follow at residues 1 to 83 and 248 to 280; these read MELK…EEEQ and IRHR…EARL. Positions 12–25 are enriched in polar residues; sequence SAKTDNHTVYQNSP. Composition is skewed to basic and acidic residues over residues 41–71 and 249–280; these read KQTR…RVDD and RHRE…EARL.

The protein belongs to the chlamydial CPn_0705/CT_671/TC_0042 family.

This is an uncharacterized protein from Chlamydia pneumoniae (Chlamydophila pneumoniae).